A 141-amino-acid chain; its full sequence is Small ribosomal subunit protein bS6 (141 aa).

Residues 96-141 (VTGPSEMLKAEENRSERRERRERPEHADGAEGDDSNDSDNSDNADE) form a disordered region. Over residues 103–124 (LKAEENRSERRERRERPEHADG) the composition is skewed to basic and acidic residues. The segment covering 125-141 (AEGDDSNDSDNSDNADE) has biased composition (acidic residues).

This sequence belongs to the bacterial ribosomal protein bS6 family.

Functionally, binds together with bS18 to 16S ribosomal RNA. In Pseudomonas entomophila (strain L48), this protein is Small ribosomal subunit protein bS6.